Here is a 793-residue protein sequence, read N- to C-terminus: Lon protease 1 (793 aa).

Positions 8 to 202 constitute a Lon N-terminal domain; it reads VPVIPLKNSV…KLLDRLQELK (195 aa). 354-361 contacts ATP; it reads GPPGVGKT. Residues 590–770 form the Lon proteolytic domain; it reads LLPPGVVTGL…NEVLKITLGV (181 aa). Active-site residues include Ser676 and Lys719.

This sequence belongs to the peptidase S16 family. As to quaternary structure, homohexamer. Organized in a ring with a central cavity.

It localises to the cytoplasm. The enzyme catalyses Hydrolysis of proteins in presence of ATP.. Its function is as follows. ATP-dependent serine protease that mediates the selective degradation of mutant and abnormal proteins as well as certain short-lived regulatory proteins. Required for cellular homeostasis and for survival from DNA damage and developmental changes induced by stress. Degrades polypeptides processively to yield small peptide fragments that are 5 to 10 amino acids long. Binds to DNA in a double-stranded, site-specific manner. The sequence is that of Lon protease 1 from Bdellovibrio bacteriovorus (strain ATCC 15356 / DSM 50701 / NCIMB 9529 / HD100).